Consider the following 217-residue polypeptide: Probable GTP-binding protein EngB (217 aa).

The EngB-type G domain maps to 44-217 (DRVEVCFAGR…TLRSIIAHLE (174 aa)). Residues 52 to 59 (GRSNVGKS), 79 to 83 (GRTQE), 97 to 100 (DLPG), 164 to 167 (TKAD), and 198 to 200 (TSS) contribute to the GTP site. Mg(2+)-binding residues include serine 59 and threonine 81.

The protein belongs to the TRAFAC class TrmE-Era-EngA-EngB-Septin-like GTPase superfamily. EngB GTPase family. Mg(2+) serves as cofactor.

Its function is as follows. Necessary for normal cell division and for the maintenance of normal septation. The chain is Probable GTP-binding protein EngB from Ruegeria pomeroyi (strain ATCC 700808 / DSM 15171 / DSS-3) (Silicibacter pomeroyi).